The primary structure comprises 130 residues: MAKERWGVAHIYSSENNTIIHITDITGAETIAVGSGGMVVNADRLEGSPTAAILAAKRAAALAKERGITGLHIKVRAPGGHNGPWIPGPGASAAIKTLAREGLKIGIIEDVTPTPHDGCRRKGGKRGRRV.

Belongs to the universal ribosomal protein uS11 family. Part of the 30S ribosomal subunit.

In terms of biological role, located on the platform of the 30S subunit. The protein is Small ribosomal subunit protein uS11 of Nanoarchaeum equitans (strain Kin4-M).